The chain runs to 137 residues: Small ribosomal subunit protein uS19 (137 aa).

It belongs to the universal ribosomal protein uS19 family.

Protein S19 forms a complex with S13 that binds strongly to the 16S ribosomal RNA. In Methanospirillum hungatei JF-1 (strain ATCC 27890 / DSM 864 / NBRC 100397 / JF-1), this protein is Small ribosomal subunit protein uS19.